A 412-amino-acid polypeptide reads, in one-letter code: Putative competence-damage inducible protein (412 aa).

This sequence belongs to the CinA family.

The polypeptide is Putative competence-damage inducible protein (Clostridium perfringens (strain 13 / Type A)).